The primary structure comprises 629 residues: Hemocyanin C chain (629 aa).

Cu cation-binding residues include His-175, His-179, His-206, His-326, His-330, and His-366. N-linked (GlcNAc...) asparagine glycosylation occurs at Asn-451. Cysteines 537 and 585 form a disulfide. An N-linked (GlcNAc...) asparagine glycan is attached at Asn-618.

The protein belongs to the tyrosinase family. Hemocyanin subfamily. Tarantula hemocyanin is a 24-chain polymer with seven different chains identified. As to expression, hemolymph.

The protein resides in the secreted. The protein localises to the extracellular space. Its function is as follows. Hemocyanins are copper-containing oxygen carriers occurring freely dissolved in the hemolymph of many mollusks and arthropods. The protein is Hemocyanin C chain (HCC) of Aphonopelma sp. (American tarantula).